The primary structure comprises 124 residues: Ribonuclease pancreatic (124 aa).

Basic and acidic residues predominate over residues 1 to 13 (KESAAAKFERQHI). Residues 1–23 (KESAAAKFERQHIDSSTSSVSSS) are disordered. The substrate site is built by K7 and R10. H12 functions as the Proton acceptor in the catalytic mechanism. 4 disulfides stabilise this stretch: C26–C84, C40–C95, C58–C110, and C65–C72. N34 carries N-linked (GlcNAc...) asparagine glycosylation. Residues 41–45 (KPVNT), K66, and R85 each bind substrate. H119 acts as the Proton donor in catalysis.

The protein belongs to the pancreatic ribonuclease family. Monomer. Interacts with and forms tight 1:1 complexes with RNH1. Dimerization of two such complexes may occur. Interaction with RNH1 inhibits this protein. In terms of tissue distribution, pancreas.

It localises to the secreted. It carries out the reaction an [RNA] containing cytidine + H2O = an [RNA]-3'-cytidine-3'-phosphate + a 5'-hydroxy-ribonucleotide-3'-[RNA].. The enzyme catalyses an [RNA] containing uridine + H2O = an [RNA]-3'-uridine-3'-phosphate + a 5'-hydroxy-ribonucleotide-3'-[RNA].. Functionally, endonuclease that catalyzes the cleavage of RNA on the 3' side of pyrimidine nucleotides. Acts on single-stranded and double-stranded RNA. This is Ribonuclease pancreatic (RNASE1) from Giraffa camelopardalis (Giraffe).